Consider the following 509-residue polypeptide: Maturase K (509 aa).

This sequence belongs to the intron maturase 2 family. MatK subfamily.

Its subcellular location is the plastid. The protein localises to the chloroplast. Its function is as follows. Usually encoded in the trnK tRNA gene intron. Probably assists in splicing its own and other chloroplast group II introns. This chain is Maturase K, found in Anthocercis viscosa (Sticky tailflower).